Reading from the N-terminus, the 510-residue chain is Sucrose transport protein SUC4 (510 aa).

Residues 1 to 34 (MATSDQDRRHRVTRNRPPIARPSTSSSRPVVSPP) form a disordered region. The Cytoplasmic segment spans residues 1–45 (MATSDQDRRHRVTRNRPPIARPSTSSSRPVVSPPRSKVSKRVLLR). Positions 21–34 (RPSTSSSRPVVSPP) are enriched in low complexity. Ser23 carries the post-translational modification Phosphoserine. The chain crosses the membrane as a helical span at residues 46–66 (VASVACGIQFGWALQLSLLTP). Over 67-71 (YVQEL) the chain is Extracellular. The helical transmembrane segment at 72–92 (GIPHAWASVIWLCGPLSGLFV) threads the bilayer. The Cytoplasmic segment spans residues 93 to 111 (QPLVGHSSDRCTSKYGRRR). The chain crosses the membrane as a helical span at residues 112–132 (PFIVAGAVAISISVMVIGHAA). Topologically, residues 133-148 (DIGWAFGDREGKIKPR) are extracellular. A helical membrane pass occupies residues 149–169 (AIVAFVLGFWILDVANNMTQG). At 170–187 (PCRALLADLTENDNRRTR) the chain is on the cytoplasmic side. A helical membrane pass occupies residues 188–208 (VANGYFSLFMAVGNVLGYATG). Residues 209-233 (SYNGWYKIFTFTKTVACNVECANLK) lie on the Extracellular side of the membrane. A helical transmembrane segment spans residues 234 to 254 (SAFYIDVVFIAITTILSVSAA). The Cytoplasmic portion of the chain corresponds to 255 to 291 (HEVPLASLASEAHGQTSGTDEAFLSEIFGTFRYFPGN). Residues 292-312 (VWIILLVTALTWIGWFPFILF) form a helical membrane-spanning segment. Topologically, residues 313 to 335 (DTDWMGREIYGGEPNIGTSYSAG) are extracellular. A helical membrane pass occupies residues 336–356 (VSMGALGLMLNSVFLGITSVL). Over 357-365 (MEKLCRKWG) the chain is Cytoplasmic. The chain crosses the membrane as a helical span at residues 366–386 (AGFVWGISNILMAICFLGMII). Topologically, residues 387–402 (TSFVASHLGYIGHEQP) are extracellular. Residues 403 to 423 (PASIVFAAVLIFTILGIPLAI) form a helical membrane-spanning segment. Topologically, residues 424–443 (TYSVPYALISIRIESLGLGQ) are cytoplasmic. The chain crosses the membrane as a helical span at residues 444–464 (GLSLGVLNLAIVIPQVIVSVG). Residues 465-477 (SGPWDQLFGGGNS) are Extracellular-facing. A helical transmembrane segment spans residues 478–498 (PALAVGAATGFIGGIVAILAL). At 499–510 (PRTRIQKPIPLP) the chain is on the cytoplasmic side.

It belongs to the glycoside-pentoside-hexuronide (GPH) cation symporter transporter (TC 2.A.2.4) family. As to quaternary structure, homodimer. Interacts with SUC2 and SUC3. As to expression, expressed in sink tissues, mostly in minor veins of sink leaves. Localized in companion cells.

It localises to the cell membrane. The enzyme catalyses sucrose(out) + H(+)(out) = sucrose(in) + H(+)(in). Its pathway is glycan biosynthesis; sucrose metabolism. Responsible for the transport of sucrose into the cell, with the concomitant uptake of protons (symport system). Can also transport maltose at a lesser rate. May also transport biotin. This is Sucrose transport protein SUC4 from Arabidopsis thaliana (Mouse-ear cress).